The following is a 289-amino-acid chain: Diaminopimelate epimerase (289 aa).

Substrate contacts are provided by Asn13, Gln47, and Asn67. The Proton donor role is filled by Cys76. Substrate contacts are provided by residues 77-78, Asn167, Asn200, and 218-219; these read GN and ER. Catalysis depends on Cys227, which acts as the Proton acceptor. 228-229 provides a ligand contact to substrate; it reads GT.

Belongs to the diaminopimelate epimerase family. As to quaternary structure, homodimer.

The protein localises to the cytoplasm. The catalysed reaction is (2S,6S)-2,6-diaminopimelate = meso-2,6-diaminopimelate. It functions in the pathway amino-acid biosynthesis; L-lysine biosynthesis via DAP pathway; DL-2,6-diaminopimelate from LL-2,6-diaminopimelate: step 1/1. Catalyzes the stereoinversion of LL-2,6-diaminopimelate (L,L-DAP) to meso-diaminopimelate (meso-DAP), a precursor of L-lysine and an essential component of the bacterial peptidoglycan. The chain is Diaminopimelate epimerase from Burkholderia ambifaria (strain ATCC BAA-244 / DSM 16087 / CCUG 44356 / LMG 19182 / AMMD) (Burkholderia cepacia (strain AMMD)).